A 383-amino-acid polypeptide reads, in one-letter code: Micronemal protein 3 (383 aa).

The first 26 residues, Met-1–Ala-26, serve as a signal peptide directing secretion. Positions Leu-27–Gln-66 are cleaved as a propeptide — required for proper sorting to micronemes. The tract at residues Ser-67–Cys-145 is lectin-like; required for the binding of host cells. Required for proper sorting to micronemes stretches follow at residues Ser-146–Pro-189, Cys-190–Gly-236, and Cys-237–Lys-290. Residues Ser-186 to Glu-227 form the EGF-like domain. 2 cysteine pairs are disulfide-bonded: Cys-190–Cys-204 and Cys-198–Cys-214. Residue Asn-201 is glycosylated (N-linked (GlcNAc...) asparagine). Residues Glu-294–His-359 form an involved in dimerization region.

Homodimer; dimerization is likely required for host cell binding but not for trafficking to micronemes. Removal of the propeptide occurs in a post-medial-Golgi compartment. Removal of the propeptide is required for the host cell binding. The presence of propeptide does not affect dimerization. The presence of propeptide does not affect sorting to micronemes.

Its subcellular location is the cytoplasmic vesicle. The protein resides in the secretory vesicle. The protein localises to the microneme. It is found in the secreted. It localises to the golgi apparatus. Its subcellular location is the endoplasmic reticulum. Its function is as follows. Adhesin; can bind both the host cells and the parasites. May be involved in parasite invasion by acting as a bridge between the parasite and the host cell. Triggers innate immune responses in mouse macrophages via the TLR11/MyD88/NF-kappa-B pathway. Induces TNF/TNF-alpha secretion in mouse macrophages. Induces secretion of IL6 in mouse and human macrophages likely via different mechanisms. Up-regulates expression of NOS2/iNOS in mouse macrophages. Induces mouse macrophage polarization. This Toxoplasma gondii protein is Micronemal protein 3.